The primary structure comprises 312 residues: Ribosomal RNA small subunit methyltransferase H (312 aa).

Residues 33–35, Asp-52, Phe-79, Asp-100, and Gln-107 contribute to the S-adenosyl-L-methionine site; that span reads AGH.

The protein belongs to the methyltransferase superfamily. RsmH family.

The protein resides in the cytoplasm. The catalysed reaction is cytidine(1402) in 16S rRNA + S-adenosyl-L-methionine = N(4)-methylcytidine(1402) in 16S rRNA + S-adenosyl-L-homocysteine + H(+). Functionally, specifically methylates the N4 position of cytidine in position 1402 (C1402) of 16S rRNA. The sequence is that of Ribosomal RNA small subunit methyltransferase H from Finegoldia magna (strain ATCC 29328 / DSM 20472 / WAL 2508) (Peptostreptococcus magnus).